The sequence spans 1763 residues: Collagen alpha-2(IV) chain (1763 aa).

The signal sequence occupies residues methionine 1 to serine 26. A 7S domain region spans residues threonine 27–valine 42. The tract at residues glycine 43–serine 1529 is triple-helical region. 2 disordered regions span residues proline 51–lysine 529 and alanine 550–serine 1529. Positions proline 72 to glutamine 81 are enriched in low complexity. Asparagine 126 is a glycosylation site (N-linked (GlcNAc...) asparagine). Pro residues predominate over residues proline 135–valine 152. The segment covering phenylalanine 190 to aspartate 199 has biased composition (basic and acidic residues). Positions arginine 206–asparagine 217 are enriched in pro residues. Residues proline 225–arginine 235 are compositionally biased toward low complexity. Alanine 249 carries an O-linked (Xyl...) (glycosaminoglycan) serine glycan. Positions aspartate 326–proline 335 are enriched in low complexity. The segment covering glycine 400–glycine 409 has biased composition (gly residues). 2 stretches are compositionally biased toward low complexity: residues leucine 410 to proline 419 and isoleucine 428 to arginine 453. Over residues lysine 466–glutamate 481 the composition is skewed to basic and acidic residues. Over residues leucine 564–alanine 582 the composition is skewed to low complexity. The span at proline 583–proline 592 shows a compositional bias: pro residues. Composition is skewed to low complexity over residues aspartate 699 to proline 714 and lysine 731 to proline 783. Positions proline 810–phenylalanine 832 are enriched in pro residues. 10 stretches are compositionally biased toward low complexity: residues glutamate 865–proline 895, phenylalanine 946–lysine 977, proline 1040–proline 1051, leucine 1077–leucine 1086, proline 1108–leucine 1146, proline 1210–arginine 1231, leucine 1280–lysine 1296, proline 1367–proline 1386, leucine 1462–alanine 1480, and proline 1499–isoleucine 1510. The span at proline 1511–proline 1528 shows a compositional bias: pro residues. Residues glycine 1533–proline 1756 form the Collagen IV NC1 domain. 6 disulfide bridges follow: cysteine 1548–cysteine 1637, cysteine 1581–cysteine 1634, cysteine 1593–cysteine 1599, cysteine 1656–cysteine 1752, cysteine 1690–cysteine 1749, and cysteine 1702–cysteine 1709.

Belongs to the type IV collagen family. Trimers of two alpha 1(IV) and one alpha 2(IV) chain. Type IV collagen forms a mesh-like network linked through intermolecular interactions between 7S domains and between NC1 domains. Post-translationally, prolines at the third position of the tripeptide repeating unit (G-X-Y) are hydroxylated in some or all of the chains. Type IV collagens contain numerous cysteine residues which are involved in inter- and intramolecular disulfide bonding. 12 of these, located in the NC1 domain, are conserved in all known type IV collagens. In terms of processing, the trimeric structure of the NC1 domains is stabilized by covalent bonds between Lys and Met residues.

The protein localises to the secreted. It is found in the extracellular space. Its subcellular location is the extracellular matrix. It localises to the basement membrane. Its function is as follows. Collagen type IV is specific for basement membranes. This Ascaris suum (Pig roundworm) protein is Collagen alpha-2(IV) chain.